The chain runs to 340 residues: Probable serine acetyltransferase 5 (340 aa).

Low complexity-rich tracts occupy residues 1 to 17 (MLVV…RVAA) and 54 to 64 (PAEVVPAFAPP). Positions 1–67 (MLVVVARKSS…VPAFAPPESE (67 aa)) are disordered.

Belongs to the transferase hexapeptide repeat family. Homomultimer.

The catalysed reaction is L-serine + acetyl-CoA = O-acetyl-L-serine + CoA. It functions in the pathway amino-acid biosynthesis; L-cysteine biosynthesis; L-cysteine from L-serine: step 1/2. This is Probable serine acetyltransferase 5 (SAT5) from Oryza sativa subsp. japonica (Rice).